Reading from the N-terminus, the 552-residue chain is 2,3-bisphosphoglycerate-independent phosphoglycerate mutase (552 aa).

The segment covering 1 to 25 (MTNTQQQSESIDDNQAQLSKQQNSD) has biased composition (polar residues). The disordered stretch occupies residues 1–30 (MTNTQQQSESIDDNQAQLSKQQNSDNNKKV). Asp-38 and Ser-88 together coordinate Mn(2+). The active-site Phosphoserine intermediate is the Ser-88. Residues His-149, 179–180 (RD), Arg-217, Arg-223, 293–296 (RADR), and Lys-373 contribute to the substrate site. Residues Asp-440, His-444, Asp-481, His-482, and His-500 each coordinate Mn(2+).

It belongs to the BPG-independent phosphoglycerate mutase family. Monomer. Mn(2+) is required as a cofactor.

The enzyme catalyses (2R)-2-phosphoglycerate = (2R)-3-phosphoglycerate. Its pathway is carbohydrate degradation; glycolysis; pyruvate from D-glyceraldehyde 3-phosphate: step 3/5. Functionally, catalyzes the interconversion of 2-phosphoglycerate and 3-phosphoglycerate. The polypeptide is 2,3-bisphosphoglycerate-independent phosphoglycerate mutase (Psychrobacter arcticus (strain DSM 17307 / VKM B-2377 / 273-4)).